We begin with the raw amino-acid sequence, 206 residues long: Glycerol-3-phosphate acyltransferase (206 aa).

The next 5 membrane-spanning stretches (helical) occupy residues 14 to 34 (IALA…GLIL), 67 to 87 (ATLL…GYFL), 91 to 111 (AAII…WIGF), 124 to 144 (LLGV…AVAV), and 148 to 168 (YSSL…LILG).

Belongs to the PlsY family. Probably interacts with PlsX.

The protein localises to the cell inner membrane. The enzyme catalyses an acyl phosphate + sn-glycerol 3-phosphate = a 1-acyl-sn-glycero-3-phosphate + phosphate. The protein operates within lipid metabolism; phospholipid metabolism. In terms of biological role, catalyzes the transfer of an acyl group from acyl-phosphate (acyl-PO(4)) to glycerol-3-phosphate (G3P) to form lysophosphatidic acid (LPA). This enzyme utilizes acyl-phosphate as fatty acyl donor, but not acyl-CoA or acyl-ACP. The chain is Glycerol-3-phosphate acyltransferase from Rhizobium etli (strain ATCC 51251 / DSM 11541 / JCM 21823 / NBRC 15573 / CFN 42).